The chain runs to 213 residues: Probable transaldolase (213 aa).

Lysine 83 acts as the Schiff-base intermediate with substrate in catalysis.

It belongs to the transaldolase family. Type 3B subfamily.

It localises to the cytoplasm. It carries out the reaction D-sedoheptulose 7-phosphate + D-glyceraldehyde 3-phosphate = D-erythrose 4-phosphate + beta-D-fructose 6-phosphate. The protein operates within carbohydrate degradation; pentose phosphate pathway; D-glyceraldehyde 3-phosphate and beta-D-fructose 6-phosphate from D-ribose 5-phosphate and D-xylulose 5-phosphate (non-oxidative stage): step 2/3. Its function is as follows. Transaldolase is important for the balance of metabolites in the pentose-phosphate pathway. The polypeptide is Probable transaldolase (Geobacillus thermodenitrificans (strain NG80-2)).